The primary structure comprises 81 residues: MLKIRLKRFGRKAQPCYRIVVTDSRVKRDGKALEEVGFYNPLTDETHLKFNRIVERLKTGAQPTETVRNIFLKAKVFDALT.

It belongs to the bacterial ribosomal protein bS16 family.

It localises to the plastid. The protein localises to the chloroplast. The chain is Small ribosomal subunit protein bS16c from Emiliania huxleyi (Coccolithophore).